A 498-amino-acid chain; its full sequence is NADH-quinone oxidoreductase subunit N (498 aa).

14 helical membrane-spanning segments follow: residues 10-30 (LMPL…MLLI), 44-64 (VVGL…GKFV), 68-88 (VMGM…ILVA), 109-129 (ELYL…ASSH), 130-150 (YASF…LLAY), 164-184 (YLVL…YIYA), 207-227 (VLLG…LAPF), 239-259 (PAPM…GLFV), 273-293 (LVTV…LLAV), 301-321 (ILGY…ISMT), 328-348 (VTVY…AVAL), 377-397 (ATLT…GFIG), 412-434 (FLAA…VMVV), and 458-478 (LMVL…DPMI).

It belongs to the complex I subunit 2 family. In terms of assembly, NDH-1 is composed of 14 different subunits. Subunits NuoA, H, J, K, L, M, N constitute the membrane sector of the complex.

It is found in the cell inner membrane. It catalyses the reaction a quinone + NADH + 5 H(+)(in) = a quinol + NAD(+) + 4 H(+)(out). NDH-1 shuttles electrons from NADH, via FMN and iron-sulfur (Fe-S) centers, to quinones in the respiratory chain. The immediate electron acceptor for the enzyme in this species is believed to be ubiquinone. Couples the redox reaction to proton translocation (for every two electrons transferred, four hydrogen ions are translocated across the cytoplasmic membrane), and thus conserves the redox energy in a proton gradient. This is NADH-quinone oxidoreductase subunit N from Acinetobacter baumannii (strain AB0057).